Here is a 222-residue protein sequence, read N- to C-terminus: Phosphatidylinositol phosphate synthase (222 aa).

31-34 (DIVT) provides a ligand contact to a CDP-1,2-diacyl-sn-glycerol. The next 2 membrane-spanning stretches (helical) occupy residues 32-49 (IVTLAGTAAAVIGALTLF) and 55-74 (WWGAVVVSFFVLADMLDGAM). Mg(2+) contacts are provided by Asp-68 and Asp-71. Positions 72, 76, and 82 each coordinate a CDP-1,2-diacyl-sn-glycerol. Residues Asp-89 and Asp-93 each contribute to the Mg(2+) site. Asp-93 functions as the Proton acceptor in the catalytic mechanism. Transmembrane regions (helical) follow at residues 95–112 (LGDGAVFAGLTWWAAFGL), 118–136 (VVATLICLVTSQVISYIKA), 156–173 (LVIVLIGAGLSDLPFFPL), and 179–196 (VAMWVLAVASVVTLLQRV).

It belongs to the CDP-alcohol phosphatidyltransferase class-I family. In terms of assembly, homodimer. Requires Mg(2+) as cofactor.

Its subcellular location is the cell membrane. The protein resides in the secreted. The protein localises to the cell wall. It carries out the reaction a CDP-1,2-diacyl-sn-glycerol + 1D-myo-inositol 3-phosphate = a 1,2-diacyl-sn-glycero-3-phospho-(1D-myo-inositol-3-phosphate) + CMP + H(+). The catalysed reaction is 1,2-di-(9Z-octadecenoyl)-sn-glycero-3-cytidine-5'-diphosphate + 1D-myo-inositol 3-phosphate = 1,2-di-(9Z-octadecenoyl)-sn-glycero-3-phospho-(1D-myo-inositol-3-phosphate) + CMP + H(+). It catalyses the reaction 1,2-dihexadecanoyl-sn-glycero-3-CDP + 1D-myo-inositol 3-phosphate = 1,2-dihexadecanoyl-sn-glycero-3-phospho-(1D-myo-inositol-3-phosphate) + CMP + H(+). It functions in the pathway phospholipid metabolism; phosphatidylinositol phosphate biosynthesis. Competitively inhibited by several inositol 1-phosphate analogs, including the phosphonate analog 1-deoxy-1-phosphonomethyl-myo-inositol (Ino-C-P). This leads to inhibition of M.smegmatis growth. Its function is as follows. Catalyzes the conjugation of the 1'-hydroxyl group of D-myo-inositol-3-phosphate (also named L-myo-inositol-1-phosphate) with a lipid tail of cytidine diphosphate diacylglycerol (CDP-DAG), forming phosphatidylinositol phosphate (PIP) and CMP. PIP is a precursor of phosphatidylinositol (PI) which is an essential lipid for mycobacteria required for formation of their cell wall. Is essential to the survival of M.smegmatis. The chain is Phosphatidylinositol phosphate synthase from Mycolicibacterium smegmatis (strain ATCC 700084 / mc(2)155) (Mycobacterium smegmatis).